The chain runs to 239 residues: Ribosomal RNA small subunit methyltransferase G (239 aa).

S-adenosyl-L-methionine is bound by residues Gly-75, Leu-80, 126 to 127 (AE), and Arg-142.

The protein belongs to the methyltransferase superfamily. RNA methyltransferase RsmG family.

The protein resides in the cytoplasm. Its function is as follows. Specifically methylates the N7 position of guanine in position 518 of 16S rRNA. This chain is Ribosomal RNA small subunit methyltransferase G, found in Streptomyces coelicolor (strain ATCC BAA-471 / A3(2) / M145).